A 669-amino-acid chain; its full sequence is Cysteine-rich receptor-like protein kinase 10 (669 aa).

The first 34 residues, 1 to 34 (MRRNTDQESPIMSYYSSFFFLFLFSFLTSFRVSA), serve as a signal peptide directing secretion. Topologically, residues 35–285 (QDPTYVYHTC…PRSGKDGNSK (251 aa)) are extracellular. 2 Gnk2-homologous domains span residues 38 to 142 (TYVY…NQNI) and 148 to 252 (TTGG…IYAF). N-linked (GlcNAc...) asparagine glycans are attached at residues N49, N53, N71, and N80. 2 disulfide bridges follow: C96-C105 and C108-C133. N114, N159, N185, and N196 each carry an N-linked (GlcNAc...) asparagine glycan. Intrachain disulfides connect C209–C218 and C221–C243. Over residues 260-274 (PPPPPPSISTPPVSA) the composition is skewed to pro residues. The interval 260–280 (PPPPPPSISTPPVSAPPRSGK) is disordered. A helical membrane pass occupies residues 286–306 (VLVIAIVVPIIVAVLLFIAGY). The Cytoplasmic segment spans residues 307–669 (CFLTRRARKS…DASITDIHPR (363 aa)). A Protein kinase domain is found at 348 to 634 (FVESNKIGQG…TLPVPRQPGL (287 aa)). ATP is bound by residues 354-362 (IGQGGFGEV) and K376. At Y421 the chain carries Phosphotyrosine. D473 functions as the Proton acceptor in the catalytic mechanism. S477 is modified (phosphoserine). T513 is modified (phosphothreonine). Phosphotyrosine is present on Y521.

It belongs to the protein kinase superfamily. Ser/Thr protein kinase family. CRK subfamily. In terms of assembly, interacts with CRKIP1 (KAPP), CRKIP2 and CRKIP3, three kinase-associated type 2C proteins.

It localises to the membrane. It catalyses the reaction L-seryl-[protein] + ATP = O-phospho-L-seryl-[protein] + ADP + H(+). It carries out the reaction L-threonyl-[protein] + ATP = O-phospho-L-threonyl-[protein] + ADP + H(+). The polypeptide is Cysteine-rich receptor-like protein kinase 10 (CRK10) (Arabidopsis thaliana (Mouse-ear cress)).